The primary structure comprises 254 residues: Flavin-dependent thymidylate synthase (254 aa).

A ThyX domain is found at 7–237 (LRVQLIARTE…PAVFADFEIY (231 aa)). FAD is bound by residues Ser-71, 95 to 97 (RHR), and Gln-103. Residues 92–95 (ELIR), 103–107 (QLSQR), and Arg-176 contribute to the dUMP site. The short motif at 95 to 105 (RHRHFSYSQLS) is the ThyX motif element. Residues 192–194 (NYR) and His-198 contribute to the FAD site. Arg-203 is a binding site for dUMP. Arg-203 acts as the Involved in ionization of N3 of dUMP, leading to its activation in catalysis.

It belongs to the thymidylate synthase ThyX family. Homotetramer. The cofactor is FAD.

It carries out the reaction dUMP + (6R)-5,10-methylene-5,6,7,8-tetrahydrofolate + NADPH + H(+) = dTMP + (6S)-5,6,7,8-tetrahydrofolate + NADP(+). Its pathway is pyrimidine metabolism; dTTP biosynthesis. Catalyzes the reductive methylation of 2'-deoxyuridine-5'-monophosphate (dUMP) to 2'-deoxythymidine-5'-monophosphate (dTMP) while utilizing 5,10-methylenetetrahydrofolate (mTHF) as the methyl donor, and NADPH and FADH(2) as the reductant. In Mycobacterium sp. (strain JLS), this protein is Flavin-dependent thymidylate synthase.